Here is a 181-residue protein sequence, read N- to C-terminus: MAFDLTDAKSRMQGAQDALQRELTSIRTGRANPHILDRIEVEYYGAMTPLNQVASISVPEARVLLITPFDKTALEEIIRAINMSDLGLNPSSDGNIVRLMIPQMTEEGRKDLAKQVKAEAEKAKVSVRNVRRDAMDSVKKEKEMPEDDVRKAENDIQKLTDNNIKAIDDIASEKEKELLTI.

Residues 131–154 form a disordered region; the sequence is RRDAMDSVKKEKEMPEDDVRKAEN.

Belongs to the RRF family.

Its subcellular location is the cytoplasm. Functionally, responsible for the release of ribosomes from messenger RNA at the termination of protein biosynthesis. May increase the efficiency of translation by recycling ribosomes from one round of translation to another. In Leuconostoc citreum (strain KM20), this protein is Ribosome-recycling factor.